The sequence spans 316 residues: Pantothenate kinase (316 aa).

95–102 (GSVAVGKS) contacts ATP.

It belongs to the prokaryotic pantothenate kinase family.

It is found in the cytoplasm. It carries out the reaction (R)-pantothenate + ATP = (R)-4'-phosphopantothenate + ADP + H(+). Its pathway is cofactor biosynthesis; coenzyme A biosynthesis; CoA from (R)-pantothenate: step 1/5. The polypeptide is Pantothenate kinase (Serratia proteamaculans (strain 568)).